The primary structure comprises 214 residues: Large ribosomal subunit protein bL25 (214 aa).

Residues 189-214 (IHASRKAKADEDEAAEGEEGEEGAED) form a disordered region. Positions 198–214 (DEDEAAEGEEGEEGAED) are enriched in acidic residues.

This sequence belongs to the bacterial ribosomal protein bL25 family. CTC subfamily. Part of the 50S ribosomal subunit; part of the 5S rRNA/L5/L18/L25 subcomplex. Contacts the 5S rRNA. Binds to the 5S rRNA independently of L5 and L18.

Functionally, this is one of the proteins that binds to the 5S RNA in the ribosome where it forms part of the central protuberance. The polypeptide is Large ribosomal subunit protein bL25 (Alkalilimnicola ehrlichii (strain ATCC BAA-1101 / DSM 17681 / MLHE-1)).